Reading from the N-terminus, the 254-residue chain is RxLR effector protein CRE5 (254 aa).

Positions 1–19 (MQTIQLIIFVAFVLSRAAA) are cleaved as a signal peptide. Asn49 carries N-linked (GlcNAc...) asparagine glycosylation. The RxLR-dEER signature appears at 53-63 (RSLRQHEGEDR). Residues 191-254 (SRWLSAGVVT…MEEGGVCRAL (64 aa)) form the Nudix hydrolase domain. The short motif at 228–249 (GGWDRGEKIKKAALREVMEEGG) is the Nudix box element.

This sequence in the N-terminal section; belongs to the RxLR effector family. The protein in the C-terminal section; belongs to the Nudix hydrolase family.

It is found in the secreted. The protein resides in the host cytoplasm. Its subcellular location is the host nucleus. The protein localises to the host nucleolus. In terms of biological role, effector that is involved in host plant infection. Contributes to virulence during the early infection stage, by inhibiting plant defense responses induced by both PAMP-triggered immunity (PTI) and effector-triggered immunity (ETI). In Phytophthora infestans (strain T30-4) (Potato late blight agent), this protein is RxLR effector protein CRE5.